Consider the following 429-residue polypeptide: Mannose-6-phosphate isomerase (429 aa).

Residues Q110, H112, E137, and H282 each contribute to the Zn(2+) site. R301 is an active-site residue.

It belongs to the mannose-6-phosphate isomerase type 1 family. Zn(2+) is required as a cofactor.

The protein resides in the cytoplasm. The enzyme catalyses D-mannose 6-phosphate = D-fructose 6-phosphate. It participates in nucleotide-sugar biosynthesis; GDP-alpha-D-mannose biosynthesis; alpha-D-mannose 1-phosphate from D-fructose 6-phosphate: step 1/2. Involved in the synthesis of the GDP-mannose and dolichol-phosphate-mannose required for a number of critical mannosyl transfer reactions. This chain is Mannose-6-phosphate isomerase (PMI1), found in Candida glabrata (strain ATCC 2001 / BCRC 20586 / JCM 3761 / NBRC 0622 / NRRL Y-65 / CBS 138) (Yeast).